The sequence spans 327 residues: Cyclin-A3-3 (327 aa).

Belongs to the cyclin family. Cyclin AB subfamily.

The sequence is that of Cyclin-A3-3 (CYCA3-3) from Arabidopsis thaliana (Mouse-ear cress).